The sequence spans 256 residues: MDITPALTEMELDHKPTCETVPGLPQKKHYRQRAHSNPHSDHDIEYPLTPNHMDWTKYYGDYTKGRQVDFADIGCGYGGLLMRLSPKYPDNLMIGMEIRVKVSDYVNEKIQALRKHHAEAGHYRNVAVLRSNAMKYMPNYFHKGQLSKMFFLFPDPHFKNKKHKWRIITPTLLSEYAYVLREGGIIYTITDVKDLHEWMVKHLSEHPLFERLTEEEMKKDPIVEMLFESTEEGQKVTRNDGGKWPAIFRRLPNPAL.

The tract at residues 17–45 is disordered; that stretch reads TCETVPGLPQKKHYRQRAHSNPHSDHDIE. Positions 26 to 36 are enriched in basic residues; that stretch reads QKKHYRQRAHS. Residues Gly-74, 97–98, 132–133, and Leu-152 contribute to the S-adenosyl-L-methionine site; these read EI and NA. Residue Asp-155 is part of the active site. An S-adenosyl-L-methionine-binding site is contributed by 230–232; it reads TEE.

It belongs to the class I-like SAM-binding methyltransferase superfamily. TrmB family.

It is found in the nucleus. It catalyses the reaction guanosine(46) in tRNA + S-adenosyl-L-methionine = N(7)-methylguanosine(46) in tRNA + S-adenosyl-L-homocysteine. It participates in tRNA modification; N(7)-methylguanine-tRNA biosynthesis. In terms of biological role, catalyzes the formation of N(7)-methylguanine at position 46 (m7G46) in tRNA. This Caenorhabditis elegans protein is tRNA (guanine-N(7)-)-methyltransferase.